A 114-amino-acid chain; its full sequence is Histone H3-5 (114 aa).

Residues 1–29 (NTGAKAPRKQLANKAARKSTNVNAVSGVK) form a disordered region.

It belongs to the histone H3 family. As to quaternary structure, the nucleosome is a histone octamer containing two molecules each of H2A, H2B, H3 and H4 assembled in one H3-H4 heterotetramer and two H2A-H2B heterodimers. The octamer wraps approximately 147 bp of DNA.

The protein localises to the nucleus. It localises to the chromosome. In terms of biological role, core component of nucleosome. Nucleosomes wrap and compact DNA into chromatin, limiting DNA accessibility to the cellular machineries which require DNA as a template. Histones thereby play a central role in transcription regulation, DNA repair, DNA replication and chromosomal stability. DNA accessibility is regulated via a complex set of post-translational modifications of histones, also called histone code, and nucleosome remodeling. This Stylonychia lemnae (Ciliate) protein is Histone H3-5 (H3-5).